We begin with the raw amino-acid sequence, 671 residues long: DNA ligase (671 aa).

NAD(+) contacts are provided by residues 32-36 (DAEYD), 81-82 (SL), and Glu113. The active-site N6-AMP-lysine intermediate is the Lys115. Residues Arg136, Glu173, Lys290, and Lys314 each contribute to the NAD(+) site. Zn(2+)-binding residues include Cys408, Cys411, Cys426, and Cys432. One can recognise a BRCT domain in the interval 593–671 (EIDSPFAGKT…EAEMLRLLGV (79 aa)).

This sequence belongs to the NAD-dependent DNA ligase family. LigA subfamily. The cofactor is Mg(2+). Requires Mn(2+) as cofactor.

The enzyme catalyses NAD(+) + (deoxyribonucleotide)n-3'-hydroxyl + 5'-phospho-(deoxyribonucleotide)m = (deoxyribonucleotide)n+m + AMP + beta-nicotinamide D-nucleotide.. In terms of biological role, DNA ligase that catalyzes the formation of phosphodiester linkages between 5'-phosphoryl and 3'-hydroxyl groups in double-stranded DNA using NAD as a coenzyme and as the energy source for the reaction. It is essential for DNA replication and repair of damaged DNA. The chain is DNA ligase from Salmonella arizonae (strain ATCC BAA-731 / CDC346-86 / RSK2980).